The following is a 438-amino-acid chain: 23S rRNA (uracil(1939)-C(5))-methyltransferase RlmD (438 aa).

Positions 13-71 constitute a TRAM domain; that stretch reads KAPLGPMQTYLVEGLTHEAKGVARLNGKVTFIEGALPGETVTAQVNKPGRRFDEAVLNA. Residues cysteine 84, cysteine 90, cysteine 93, and cysteine 167 each contribute to the [4Fe-4S] cluster site. 6 residues coordinate S-adenosyl-L-methionine: glutamine 271, phenylalanine 300, asparagine 305, glutamate 321, aspartate 348, and aspartate 368. The Nucleophile role is filled by cysteine 394.

Belongs to the class I-like SAM-binding methyltransferase superfamily. RNA M5U methyltransferase family. RlmD subfamily.

It carries out the reaction uridine(1939) in 23S rRNA + S-adenosyl-L-methionine = 5-methyluridine(1939) in 23S rRNA + S-adenosyl-L-homocysteine + H(+). Catalyzes the formation of 5-methyl-uridine at position 1939 (m5U1939) in 23S rRNA. The chain is 23S rRNA (uracil(1939)-C(5))-methyltransferase RlmD from Marinomonas posidonica (strain CECT 7376 / NCIMB 14433 / IVIA-Po-181).